The following is a 170-amino-acid chain: uncharacterized protein (170 aa).

3 helical membrane-spanning segments follow: residues 6 to 26 (PFYF…ILLI), 31 to 51 (LLFI…LIYI), and 91 to 111 (IYFS…IVAF).

The protein to M.jannaschii MJ1249.1, MJ0210.1 and MJ0785.1.

It is found in the cell membrane. This is an uncharacterized protein from Methanocaldococcus jannaschii (strain ATCC 43067 / DSM 2661 / JAL-1 / JCM 10045 / NBRC 100440) (Methanococcus jannaschii).